The following is a 413-amino-acid chain: Aspartate aminotransferase, cytoplasmic (413 aa).

Residues glycine 39 and tryptophan 141 each contribute to the L-aspartate site. Serine 149 carries the post-translational modification Phosphoserine. Asparagine 195 provides a ligand contact to L-aspartate. Residue lysine 259 is modified to N6-(pyridoxal phosphate)lysine. Arginine 387 is a binding site for L-aspartate.

The protein belongs to the class-I pyridoxal-phosphate-dependent aminotransferase family. Homodimer. Requires pyridoxal 5'-phosphate as cofactor.

The protein resides in the cytoplasm. It carries out the reaction L-aspartate + 2-oxoglutarate = oxaloacetate + L-glutamate. The enzyme catalyses L-cysteine + 2-oxoglutarate = 2-oxo-3-sulfanylpropanoate + L-glutamate. It catalyses the reaction (2S)-2-aminobutanoate + 2-oxoglutarate = 2-oxobutanoate + L-glutamate. The catalysed reaction is 3-sulfino-L-alanine + 2-oxoglutarate = 3-sulfinopyruvate + L-glutamate. In terms of biological role, biosynthesis of L-glutamate from L-aspartate or L-cysteine. Important regulator of levels of glutamate, the major excitatory neurotransmitter of the vertebrate central nervous system. Acts as a scavenger of glutamate in brain neuroprotection. The aspartate aminotransferase activity is involved in hepatic glucose synthesis during development and in adipocyte glyceroneogenesis. Using L-cysteine as substrate, regulates levels of mercaptopyruvate, an important source of hydrogen sulfide. Mercaptopyruvate is converted into H(2)S via the action of 3-mercaptopyruvate sulfurtransferase (3MST). Hydrogen sulfide is an important synaptic modulator and neuroprotectant in the brain. This is Aspartate aminotransferase, cytoplasmic from Macaca fascicularis (Crab-eating macaque).